A 350-amino-acid polypeptide reads, in one-letter code: [LysW]-L-2-aminoadipate/[LysW]-L-glutamate phosphate reductase (350 aa).

Residue 10–13 (SGYT) participates in NADP(+) binding. The active site involves cysteine 150. An NADP(+)-binding site is contributed by asparagine 317.

It belongs to the NAGSA dehydrogenase family. Type 1 subfamily. LysY sub-subfamily.

Its subcellular location is the cytoplasm. The catalysed reaction is [amino-group carrier protein]-C-terminal-N-(1-carboxy-5-oxopentan-1-yl)-L-glutamine + phosphate + NADP(+) = [amino-group carrier protein]-C-terminal-N-(1-carboxy-5-phosphooxy-5-oxopentan-1-yl)-L-glutamine + NADPH + H(+). It catalyses the reaction [amino-group carrier protein]-C-terminal-gamma-(L-glutamyl-5-semialdehyde)-L-glutamate + phosphate + NADP(+) = [amino-group carrier protein]-C-terminal-gamma-(5-phospho-L-glutamyl)-L-glutamate + NADPH + H(+). It participates in amino-acid biosynthesis; L-lysine biosynthesis via AAA pathway; L-lysine from L-alpha-aminoadipate (Thermus route): step 3/5. It functions in the pathway amino-acid biosynthesis; L-arginine biosynthesis. Involved in both the arginine and lysine biosynthetic pathways. This is [LysW]-L-2-aminoadipate/[LysW]-L-glutamate phosphate reductase from Sulfolobus acidocaldarius (strain ATCC 33909 / DSM 639 / JCM 8929 / NBRC 15157 / NCIMB 11770).